Reading from the N-terminus, the 142-residue chain is Peptide methionine sulfoxide reductase MsrB (142 aa).

A MsrB domain is found at 2-125; that stretch reads LKKDKSELTD…NSAAIQFIPY (124 aa). Residue Cys-114 is the Nucleophile of the active site.

The protein belongs to the MsrB Met sulfoxide reductase family.

It carries out the reaction L-methionyl-[protein] + [thioredoxin]-disulfide + H2O = L-methionyl-(R)-S-oxide-[protein] + [thioredoxin]-dithiol. The chain is Peptide methionine sulfoxide reductase MsrB from Staphylococcus aureus (strain bovine RF122 / ET3-1).